We begin with the raw amino-acid sequence, 181 residues long: MADPGNRGGIHRPLSFTCSLLIVGMCCVSPFFCHSQTDLLALSQADPQCWESSSVLLLEMWKPRVSNTVSGFWDFMIYLKSSENLKHGALFWDLAQLFWDIYVDCVLSRNHGLGRRQLVGEEEKISAAQPQHTRSKQGTYSQLLRTSFLKKKELIEDLISMHVRRSGSSVIGKVNLEIKRK.

An N-terminal signal peptide occupies residues 1–33; the sequence is MADPGNRGGIHRPLSFTCSLLIVGMCCVSPFFC. A Leucine amide modification is found at Leu-113. Residues 114–181 constitute a propeptide, removed in the mature form; the sequence is GRRQLVGEEE…GKVNLEIKRK (68 aa).

In terms of processing, the active form requires C-terminal amidation and disulfide bond formation. As to expression, expressed in the pituitary, testis, and heart and at lower levels in the brain.

The protein resides in the secreted. In terms of biological role, may be capable of activating GPR83 via the GNAQ signaling pathway. This is Protein FAM237A from Homo sapiens (Human).